Here is a 93-residue protein sequence, read N- to C-terminus: UPF0367 protein tsr0804 (93 aa).

The protein belongs to the UPF0367 family.

In Thermosynechococcus vestitus (strain NIES-2133 / IAM M-273 / BP-1), this protein is UPF0367 protein tsr0804.